The following is a 317-amino-acid chain: Pinoresinol reductase 2 (317 aa).

Residues T18, S20, L21, R41, K50, S90, G91, R95, N98, and S121 each coordinate NADP(+). M125 contacts (-)-pinoresinol. NADP(+) is bound by residues K144 and F166. K144 serves as the catalytic Proton acceptor. G178 contacts (-)-pinoresinol.

The protein belongs to the NmrA-type oxidoreductase family. Isoflavone reductase subfamily. Forms homodimers. In terms of tissue distribution, expressed in roots. Detected in stems.

It catalyses the reaction (-)-lariciresinol + NADP(+) = (-)-pinoresinol + NADPH + H(+). Its function is as follows. Reductase involved in lignan biosynthesis. Unlike conventional pinoresinol reductases that can reduce both pinoresinol and lariciresinol, PRR2 shows a strict substrate selectivity for (-)-pinoresinol. No activity with (+)-pinoresinol or lariciresinol. Abstracts the 4R-hydride from the NADPH cofactor during catalysis. This is Pinoresinol reductase 2 from Arabidopsis thaliana (Mouse-ear cress).